The following is a 263-amino-acid chain: Indole-3-glycerol phosphate synthase (263 aa).

This sequence belongs to the TrpC family.

The enzyme catalyses 1-(2-carboxyphenylamino)-1-deoxy-D-ribulose 5-phosphate + H(+) = (1S,2R)-1-C-(indol-3-yl)glycerol 3-phosphate + CO2 + H2O. It participates in amino-acid biosynthesis; L-tryptophan biosynthesis; L-tryptophan from chorismate: step 4/5. In Rhodospirillum rubrum (strain ATCC 11170 / ATH 1.1.1 / DSM 467 / LMG 4362 / NCIMB 8255 / S1), this protein is Indole-3-glycerol phosphate synthase.